The following is a 234-amino-acid chain: Immune-associated nucleotide-binding protein 2 (234 aa).

The AIG1-type G domain occupies 21–223; that stretch reads KPVKNIVLVG…YTEDMYRNIK (203 aa). Residues 30–38, Ser-51, and Asn-183 each bind GTP; that span reads GRSVNGICT.

This sequence belongs to the TRAFAC class TrmE-Era-EngA-EngB-Septin-like GTPase superfamily. AIG1/Toc34/Toc159-like paraseptin GTPase family. IAN subfamily. In terms of tissue distribution, mostly expressed in pollen. Also detected in lateral roots and radicles.

The protein is Immune-associated nucleotide-binding protein 2 of Arabidopsis thaliana (Mouse-ear cress).